The primary structure comprises 220 residues: Glycerol-3-phosphate acyltransferase (220 aa).

The next 6 membrane-spanning stretches (helical) occupy residues 11–31, 70–90, 96–116, 127–147, 153–173, and 193–213; these read INVI…GYAL, LLVL…SKLF, LQWM…FLNF, GSVV…WFFV, ISSL…FFVP, and MVLI…NLLA.

It belongs to the PlsY family. In terms of assembly, probably interacts with PlsX.

Its subcellular location is the cell inner membrane. It catalyses the reaction an acyl phosphate + sn-glycerol 3-phosphate = a 1-acyl-sn-glycero-3-phosphate + phosphate. Its pathway is lipid metabolism; phospholipid metabolism. Functionally, catalyzes the transfer of an acyl group from acyl-phosphate (acyl-PO(4)) to glycerol-3-phosphate (G3P) to form lysophosphatidic acid (LPA). This enzyme utilizes acyl-phosphate as fatty acyl donor, but not acyl-CoA or acyl-ACP. The sequence is that of Glycerol-3-phosphate acyltransferase from Helicobacter pylori (strain HPAG1).